A 238-amino-acid chain; its full sequence is Deoxyribose-phosphate aldolase (238 aa).

Asp-104 functions as the Proton donor/acceptor in the catalytic mechanism. Lys-168 functions as the Schiff-base intermediate with acetaldehyde in the catalytic mechanism. Catalysis depends on Lys-197, which acts as the Proton donor/acceptor.

The protein belongs to the DeoC/FbaB aldolase family. DeoC type 1 subfamily.

It localises to the cytoplasm. The catalysed reaction is 2-deoxy-D-ribose 5-phosphate = D-glyceraldehyde 3-phosphate + acetaldehyde. It participates in carbohydrate degradation; 2-deoxy-D-ribose 1-phosphate degradation; D-glyceraldehyde 3-phosphate and acetaldehyde from 2-deoxy-alpha-D-ribose 1-phosphate: step 2/2. Its function is as follows. Catalyzes a reversible aldol reaction between acetaldehyde and D-glyceraldehyde 3-phosphate to generate 2-deoxy-D-ribose 5-phosphate. The polypeptide is Deoxyribose-phosphate aldolase (Bacteroides thetaiotaomicron (strain ATCC 29148 / DSM 2079 / JCM 5827 / CCUG 10774 / NCTC 10582 / VPI-5482 / E50)).